A 261-amino-acid chain; its full sequence is Ribosomal RNA small subunit methyltransferase J (261 aa).

S-adenosyl-L-methionine contacts are provided by residues R109–D110, E125–R126, and D179.

It belongs to the methyltransferase superfamily. RsmJ family.

The protein localises to the cytoplasm. It carries out the reaction guanosine(1516) in 16S rRNA + S-adenosyl-L-methionine = N(2)-methylguanosine(1516) in 16S rRNA + S-adenosyl-L-homocysteine + H(+). In terms of biological role, specifically methylates the guanosine in position 1516 of 16S rRNA. This is Ribosomal RNA small subunit methyltransferase J from Pseudomonas paraeruginosa (strain DSM 24068 / PA7) (Pseudomonas aeruginosa (strain PA7)).